The sequence spans 349 residues: Nicotinate-nucleotide--dimethylbenzimidazole phosphoribosyltransferase (349 aa).

Residue glutamate 318 is the Proton acceptor of the active site.

This sequence belongs to the CobT family.

It catalyses the reaction 5,6-dimethylbenzimidazole + nicotinate beta-D-ribonucleotide = alpha-ribazole 5'-phosphate + nicotinate + H(+). Its pathway is nucleoside biosynthesis; alpha-ribazole biosynthesis; alpha-ribazole from 5,6-dimethylbenzimidazole: step 1/2. In terms of biological role, catalyzes the synthesis of alpha-ribazole-5'-phosphate from nicotinate mononucleotide (NAMN) and 5,6-dimethylbenzimidazole (DMB). This is Nicotinate-nucleotide--dimethylbenzimidazole phosphoribosyltransferase from Alkaliphilus metalliredigens (strain QYMF).